Consider the following 374-residue polypeptide: LRR repeats and ubiquitin-like domain-containing protein At2g30105 (374 aa).

The Ubiquitin-like domain occupies 13–87 (IKLTVKFGGK…LMLMASQGLH (75 aa)). LRR repeat units follow at residues 128 to 151 (WKAT…VWDC), 152 to 175 (GSGV…ISSF), 177 to 200 (SMQK…GIAS), 201 to 224 (LKRL…MGSL), 225 to 248 (TSLR…GLLT), 250 to 270 (LEIL…IGNC), 272 to 293 (FLME…FTKL), 294 to 316 (RNLK…LFKM), and 318 to 340 (LQLS…QFEG).

The polypeptide is LRR repeats and ubiquitin-like domain-containing protein At2g30105 (Arabidopsis thaliana (Mouse-ear cress)).